The chain runs to 133 residues: Small ribosomal subunit protein uS19 (133 aa).

Belongs to the universal ribosomal protein uS19 family.

Functionally, protein S19 forms a complex with S13 that binds strongly to the 16S ribosomal RNA. The polypeptide is Small ribosomal subunit protein uS19 (Thermococcus sibiricus (strain DSM 12597 / MM 739)).